The primary structure comprises 359 residues: Phosphoserine aminotransferase (359 aa).

Position 42 (arginine 42) interacts with L-glutamate. Residues 76-77, tryptophan 102, threonine 151, aspartate 170, and glutamine 193 each bind pyridoxal 5'-phosphate; that span reads AS. At lysine 194 the chain carries N6-(pyridoxal phosphate)lysine. A pyridoxal 5'-phosphate-binding site is contributed by 235–236; sequence NT.

The protein belongs to the class-V pyridoxal-phosphate-dependent aminotransferase family. SerC subfamily. As to quaternary structure, homodimer. Pyridoxal 5'-phosphate serves as cofactor.

It localises to the cytoplasm. The catalysed reaction is O-phospho-L-serine + 2-oxoglutarate = 3-phosphooxypyruvate + L-glutamate. It carries out the reaction 4-(phosphooxy)-L-threonine + 2-oxoglutarate = (R)-3-hydroxy-2-oxo-4-phosphooxybutanoate + L-glutamate. It functions in the pathway amino-acid biosynthesis; L-serine biosynthesis; L-serine from 3-phospho-D-glycerate: step 2/3. Its pathway is cofactor biosynthesis; pyridoxine 5'-phosphate biosynthesis; pyridoxine 5'-phosphate from D-erythrose 4-phosphate: step 3/5. Its function is as follows. Catalyzes the reversible conversion of 3-phosphohydroxypyruvate to phosphoserine and of 3-hydroxy-2-oxo-4-phosphonooxybutanoate to phosphohydroxythreonine. The protein is Phosphoserine aminotransferase (serC) of Bacillus subtilis (strain 168).